The following is a 600-amino-acid chain: Kelch-like protein 24 (600 aa).

One can recognise a BTB domain in the interval 66-133 (TDVIICVEGK…VYTGKVKITT (68 aa)). A BACK domain is found at 168–270 (CLGIQRFADT…HPNYFVQTVE (103 aa)). Kelch repeat units follow at residues 314–363 (VIVV…ALRN), 365–407 (ILVS…VLLG), 408–454 (KVYV…SCIG), 456–502 (LFVI…SLNN), 504–544 (IYVA…VCNG), and 546–592 (IYIL…TIHR).

As to quaternary structure, forms homodimers. Interacts with GRIK2. Component of the BCR(KLHL24) E3 ubiquitin ligase complex, composed of CUL3, RBX1 and KLHL24. Interacts with CUL3. Interacts with KRT14. Autoubiquitinated. Autoubiquitination leads to proteasomal degradation and is necessary to control KLHL24 levels. Expressed in the brain.

The protein resides in the perikaryon. It is found in the cell projection. It localises to the axon. The protein localises to the cytoplasm. Its subcellular location is the cell junction. The protein resides in the desmosome. It is found in the adherens junction. Controls KRT14 levels during keratinocytes differentiation. As part of the BCR(KLHL24) E3 ubiquitin ligase complex, mediates ubiquitination of KRT14. Specifically reduces kainate receptor-mediated currents in hippocampal neurons, most probably by modulating channel properties. Has a crucial role in cardiac development and function. The sequence is that of Kelch-like protein 24 (Klhl24) from Mus musculus (Mouse).